We begin with the raw amino-acid sequence, 241 residues long: Golgi-associated RAB2 interactor protein 6 (241 aa).

This sequence belongs to the GARIN family.

The protein is Golgi-associated RAB2 interactor protein 6 of Homo sapiens (Human).